Here is a 212-residue protein sequence, read N- to C-terminus: ER lumen protein-retaining receptor (212 aa).

At 1–2 (MN) the chain is on the lumenal side. Residues 3 to 21 (IFRFAGDLSHVFAIIILLL) traverse the membrane as a helical segment. The Cytoplasmic portion of the chain corresponds to 22–35 (KIWKTRSCAGISGK). Residues 36-53 (SQILFAVVYLTRYLDLFT) form a helical membrane-spanning segment. At 54–61 (TYVSLYNS) the chain is on the lumenal side. Residues 62 to 80 (VMKVLFLATSGATVYLMYV) traverse the membrane as a helical segment. The Cytoplasmic portion of the chain corresponds to 81-96 (KFKATYDHNHDSFRIE). Residues 97–110 (FLLVPCALLSLVIN) form a helical membrane-spanning segment. Over 111 to 117 (HEFTVME) the chain is Lumenal. Residues 118 to 137 (VLWTFSIYLESVAILPQLFL) form a helical membrane-spanning segment. Topologically, residues 138-149 (VSRTGEAESITS) are cytoplasmic. A helical transmembrane segment spans residues 150 to 168 (HYLFALGSYRALYLLNWVY). Residues 169–178 (RYMVESHYDL) lie on the Lumenal side of the membrane. A helical transmembrane segment spans residues 179-199 (IAIFAGVVQTVLYCDFFYLYI). Topologically, residues 200 to 212 (TKVLKGKKLQLPA) are cytoplasmic.

Belongs to the ERD2 family.

It is found in the endoplasmic reticulum membrane. In terms of biological role, required for the retention of luminal endoplasmic reticulum proteins. Determines the specificity of the luminal ER protein retention system. Also required for normal vesicular traffic through the Golgi. In Drosophila melanogaster (Fruit fly), this protein is ER lumen protein-retaining receptor (KdelR).